Consider the following 299-residue polypeptide: Phosphatidylcholine-sterol acyltransferase (299 aa).

N-linked (GlcNAc...) asparagine glycosylation occurs at N30. The active-site Nucleophile is S127. N185 carries N-linked (GlcNAc...) asparagine glycosylation. Cysteines 226 and 269 form a disulfide. Catalysis depends on charge relay system residues D258 and H290.

The protein belongs to the AB hydrolase superfamily. Lipase family.

The protein resides in the secreted. The catalysed reaction is a sterol + a 1,2-diacyl-sn-glycero-3-phosphocholine = a sterol ester + a 1-acyl-sn-glycero-3-phosphocholine. APOA1 is the most potent activator in plasma. Also activated by APOE, APOC1 and APOA4. Functionally, central enzyme in the extracellular metabolism of plasma lipoproteins. Synthesized mainly in the liver and secreted into plasma where it converts cholesterol and phosphatidylcholines (lecithins) to cholesteryl esters and lysophosphatidylcholines on the surface of high and low density lipoproteins (HDLs and LDLs). The cholesterol ester is then transported back to the liver. Has a preference for plasma 16:0-18:2 or 18:O-18:2 phosphatidylcholines. Also produced in the brain by primary astrocytes, and esterifies free cholesterol on nascent APOE-containing lipoproteins secreted from glia and influences cerebral spinal fluid (CSF) APOE- and APOA1 levels. Together with APOE and the cholesterol transporter ABCA1, plays a key role in the maturation of glial-derived, nascent lipoproteins. Required for remodeling high-density lipoprotein particles into their spherical forms. This chain is Phosphatidylcholine-sterol acyltransferase (LCAT), found in Eliomys quercinus (Garden dormouse).